Here is a 338-residue protein sequence, read N- to C-terminus: Ketol-acid reductoisomerase (NADP(+)) (338 aa).

Positions 1 to 181 constitute a KARI N-terminal Rossmann domain; that stretch reads MKVFYDKDCD…GGGKAGIIET (181 aa). Residues 24 to 27, R47, and S52 each bind NADP(+); that span reads YGSQ. The active site involves H107. G133 is a binding site for NADP(+). A KARI C-terminal knotted domain is found at 182–327; sequence NFREETETDL…GKLRAMMPWI (146 aa). 4 residues coordinate Mg(2+): D190, E194, E226, and E230. S251 is a binding site for substrate.

This sequence belongs to the ketol-acid reductoisomerase family. Mg(2+) is required as a cofactor.

The catalysed reaction is (2R)-2,3-dihydroxy-3-methylbutanoate + NADP(+) = (2S)-2-acetolactate + NADPH + H(+). It catalyses the reaction (2R,3R)-2,3-dihydroxy-3-methylpentanoate + NADP(+) = (S)-2-ethyl-2-hydroxy-3-oxobutanoate + NADPH + H(+). Its pathway is amino-acid biosynthesis; L-isoleucine biosynthesis; L-isoleucine from 2-oxobutanoate: step 2/4. It participates in amino-acid biosynthesis; L-valine biosynthesis; L-valine from pyruvate: step 2/4. Its function is as follows. Involved in the biosynthesis of branched-chain amino acids (BCAA). Catalyzes an alkyl-migration followed by a ketol-acid reduction of (S)-2-acetolactate (S2AL) to yield (R)-2,3-dihydroxy-isovalerate. In the isomerase reaction, S2AL is rearranged via a Mg-dependent methyl migration to produce 3-hydroxy-3-methyl-2-ketobutyrate (HMKB). In the reductase reaction, this 2-ketoacid undergoes a metal-dependent reduction by NADPH to yield (R)-2,3-dihydroxy-isovalerate. This is Ketol-acid reductoisomerase (NADP(+)) from Polaromonas naphthalenivorans (strain CJ2).